Here is a 368-residue protein sequence, read N- to C-terminus: DNA replication and repair protein RecF (368 aa).

Position 30–37 (30–37 (GDNGAGKT)) interacts with ATP.

This sequence belongs to the RecF family.

The protein localises to the cytoplasm. Functionally, the RecF protein is involved in DNA metabolism; it is required for DNA replication and normal SOS inducibility. RecF binds preferentially to single-stranded, linear DNA. It also seems to bind ATP. This Xanthomonas oryzae pv. oryzae (strain KACC10331 / KXO85) protein is DNA replication and repair protein RecF.